We begin with the raw amino-acid sequence, 256 residues long: Imidazole glycerol phosphate synthase subunit HisF (256 aa).

Active-site residues include aspartate 11 and aspartate 130.

The protein belongs to the HisA/HisF family. As to quaternary structure, heterodimer of HisH and HisF.

It is found in the cytoplasm. The catalysed reaction is 5-[(5-phospho-1-deoxy-D-ribulos-1-ylimino)methylamino]-1-(5-phospho-beta-D-ribosyl)imidazole-4-carboxamide + L-glutamine = D-erythro-1-(imidazol-4-yl)glycerol 3-phosphate + 5-amino-1-(5-phospho-beta-D-ribosyl)imidazole-4-carboxamide + L-glutamate + H(+). It functions in the pathway amino-acid biosynthesis; L-histidine biosynthesis; L-histidine from 5-phospho-alpha-D-ribose 1-diphosphate: step 5/9. In terms of biological role, IGPS catalyzes the conversion of PRFAR and glutamine to IGP, AICAR and glutamate. The HisF subunit catalyzes the cyclization activity that produces IGP and AICAR from PRFAR using the ammonia provided by the HisH subunit. This is Imidazole glycerol phosphate synthase subunit HisF from Synechococcus sp. (strain CC9605).